Reading from the N-terminus, the 471-residue chain is MTDLPDSTRWQLWIVAFGFFMQSLDTTIVNTALPSMAQSLGESPLHMHMVIVSYVLTVAVMLPASGWLADKVGVRNIFFTAIVLFTLGSLFCALSGTLNELLLARALQGVGGAMMVPVGRLTVMKIVPREQYMAAMTFVTLPGQVGPLLGPALGGLLVEYASWHWIFLINIPVGIIGAIATLMLMPNYTMQTRRFDLSGFLLLAVGMAVLTLALDGSKGTGFSPLAIAGLVAVGVVALVLYLLHAQNNNRALFSLKLFRTRNFSLGLAGSFAGRIGSGMLPFMTPVFLQIGLGFSPFHAGLMMIPMVLGSMGMKRIVVQVVNRFGYRRVLVATTLGLSLVTLLFMTTALLGWYYVLPFVLFLQGMVNSTRFSSMNTLTLKDLPDNLASSGNSLLSMIMQLSMSIGVTIAGLLLGLFGSQHVSVDSGTTQTVFMYTWLSMAFIIALPAFVFARVPSDTHQNVAISRRKRSAQ.

Residues 1-11 (MTDLPDSTRWQ) are Periplasmic-facing. The helical transmembrane segment at 12–32 (LWIVAFGFFMQSLDTTIVNTA) threads the bilayer. The Cytoplasmic segment spans residues 33–48 (LPSMAQSLGESPLHMH). The chain crosses the membrane as a helical span at residues 49 to 69 (MVIVSYVLTVAVMLPASGWLA). Over 70–76 (DKVGVRN) the chain is Periplasmic. The chain crosses the membrane as a helical span at residues 77-97 (IFFTAIVLFTLGSLFCALSGT). Topologically, residues 98–101 (LNEL) are cytoplasmic. The helical transmembrane segment at 102-124 (LLARALQGVGGAMMVPVGRLTVM) threads the bilayer. At 125–137 (KIVPREQYMAAMT) the chain is on the periplasmic side. A helical membrane pass occupies residues 138–158 (FVTLPGQVGPLLGPALGGLLV). At 159–164 (EYASWH) the chain is on the cytoplasmic side. The helical transmembrane segment at 165–185 (WIFLINIPVGIIGAIATLMLM) threads the bilayer. Residues 186–196 (PNYTMQTRRFD) are Periplasmic-facing. Residues 197–217 (LSGFLLLAVGMAVLTLALDGS) traverse the membrane as a helical segment. Residues 218–224 (KGTGFSP) lie on the Cytoplasmic side of the membrane. Residues 225–245 (LAIAGLVAVGVVALVLYLLHA) traverse the membrane as a helical segment. At 246–262 (QNNNRALFSLKLFRTRN) the chain is on the periplasmic side. The chain crosses the membrane as a helical span at residues 263-283 (FSLGLAGSFAGRIGSGMLPFM). Topologically, residues 284-285 (TP) are cytoplasmic. The chain crosses the membrane as a helical span at residues 286-306 (VFLQIGLGFSPFHAGLMMIPM). Over 307-341 (VLGSMGMKRIVVQVVNRFGYRRVLVATTLGLSLVT) the chain is Periplasmic. Residues 342-362 (LLFMTTALLGWYYVLPFVLFL) traverse the membrane as a helical segment. The Cytoplasmic segment spans residues 363–395 (QGMVNSTRFSSMNTLTLKDLPDNLASSGNSLLS). The chain crosses the membrane as a helical span at residues 396–416 (MIMQLSMSIGVTIAGLLLGLF). Residues 417–430 (GSQHVSVDSGTTQT) are Periplasmic-facing. The chain crosses the membrane as a helical span at residues 431-451 (VFMYTWLSMAFIIALPAFVFA). The Cytoplasmic segment spans residues 452-471 (RVPSDTHQNVAISRRKRSAQ).

This sequence belongs to the major facilitator superfamily. TCR/Tet family.

The protein localises to the cell inner membrane. The sequence is that of Putative multidrug resistance protein MdtD from Escherichia coli O1:K1 / APEC.